We begin with the raw amino-acid sequence, 166 residues long: Protein UTR5 (166 aa).

This Saccharomyces cerevisiae (strain ATCC 204508 / S288c) (Baker's yeast) protein is Protein UTR5 (UTR5).